Here is a 679-residue protein sequence, read N- to C-terminus: Single-strand DNA endonuclease ASTE1 (679 aa).

Residues 351 to 400 (TILPTQVENMQQPNAHRISQPIRQIIYGLLLNASPHLDKTSWNALPPQPL) form an interaction with SHLD2 region. Residues 625–645 (RSNSKKKRQKKQNTSCSKNRG) are disordered. Over residues 626-635 (SNSKKKRQKK) the composition is skewed to basic residues.

The protein belongs to the asteroid family. In terms of assembly, interacts with SHLD1, SHLD2, SHLD3, RIF1 and MAD2L2/REV7.

Its function is as follows. Structure-specific DNA endonuclease that specifically cleaves single-stranded DNA and 3' overhang DNA. Contributes to the control of DNA double-strand break repair choice by antagonizing BRCA1-dependent homologous recombination (HR) and promoting non-homologous end-joining (NHEJ). Recruited to the single-stranded DNA ends by SHLD2 and cleaves the 3' exposed DNA ends, therefore inhibiting DNA end resection (necessary for HR) and promoting DNA end protection (necessary for NHEJ). The sequence is that of Single-strand DNA endonuclease ASTE1 (ASTE1) from Homo sapiens (Human).